A 457-amino-acid polypeptide reads, in one-letter code: Multidrug resistance protein MdtK (457 aa).

The Cytoplasmic portion of the chain corresponds to 1–10 (MQKYISEARL). Residues 11–31 (LLALAIPVILAQIAQTAMGFV) form a helical membrane-spanning segment. Residues 32-52 (DTVMAGGYSATDMAAVAIGTS) lie on the Periplasmic side of the membrane. The helical transmembrane segment at 53-73 (IWLPAILFGHGLLLALTPVIA) threads the bilayer. Over 74-92 (QLNGSGRRERIAHQVRQGF) the chain is Cytoplasmic. Residues 93-113 (WLAGFVSVLIMLVLWNAGYII) traverse the membrane as a helical segment. Residues 114 to 126 (RSMENIDPALADK) lie on the Periplasmic side of the membrane. A helical transmembrane segment spans residues 127–147 (AVGYLRALLWGAPGYLFFQVA). Topologically, residues 148-159 (RNQCEGLAKTKP) are cytoplasmic. A helical membrane pass occupies residues 160–180 (GMVMGFIGLLVNIPVNYIFIY). The Periplasmic segment spans residues 181–188 (GHFGMPEL). Residues 189–209 (GGVGCGVATAAVYWVMFLAMV) form a helical membrane-spanning segment. The Cytoplasmic portion of the chain corresponds to 210-242 (SYIKRARSMRDIRNEKGTAKPDPAVMKRLIQLG). The helical transmembrane segment at 243-263 (LPIALALFFEVTLFAVVALLV) threads the bilayer. The Periplasmic segment spans residues 264-275 (SPLGIVDVAGHQ). A helical transmembrane segment spans residues 276 to 296 (IALNFSSLMFVLPMSLAAAVT). At 297 to 313 (IRVGYRLGQGSTLDAQT) the chain is on the cytoplasmic side. Residues 314-334 (AARTGLMVGVCMATLTAIFTV) form a helical membrane-spanning segment. The Periplasmic portion of the chain corresponds to 335–349 (SLREQIALLYNDNPE). A helical membrane pass occupies residues 350 to 370 (VVTLAAHLMLLAAVYQISDSI). Topologically, residues 371 to 386 (QVIGSGILRGYKDTRS) are cytoplasmic. A helical transmembrane segment spans residues 387-407 (IFYITFTAYWVLGLPSGYILA). The Periplasmic segment spans residues 408–417 (LTDLVVEPMG). The helical transmembrane segment at 418–438 (PAGFWIGFIIGLTSAAIMMML) threads the bilayer. Residues 439–457 (RMRFLQRMPSAIILQRASR) lie on the Cytoplasmic side of the membrane.

Belongs to the multi antimicrobial extrusion (MATE) (TC 2.A.66.1) family. MdtK subfamily.

The protein localises to the cell inner membrane. In terms of biological role, multidrug efflux pump that functions probably as a Na(+)/drug antiporter. This Shigella boydii serotype 4 (strain Sb227) protein is Multidrug resistance protein MdtK.